Here is a 173-residue protein sequence, read N- to C-terminus: uncharacterized protein (173 aa).

The segment at histidine 80–aspartate 107 is disordered. Residues lysine 85–aspartate 107 are compositionally biased toward basic and acidic residues.

This is an uncharacterized protein from Autographa californica nuclear polyhedrosis virus (AcMNPV).